The primary structure comprises 367 residues: Phosphoribosylaminoimidazole-succinocarboxamide synthase (367 aa).

Belongs to the SAICAR synthetase family.

It catalyses the reaction 5-amino-1-(5-phospho-D-ribosyl)imidazole-4-carboxylate + L-aspartate + ATP = (2S)-2-[5-amino-1-(5-phospho-beta-D-ribosyl)imidazole-4-carboxamido]succinate + ADP + phosphate + 2 H(+). It participates in purine metabolism; IMP biosynthesis via de novo pathway; 5-amino-1-(5-phospho-D-ribosyl)imidazole-4-carboxamide from 5-amino-1-(5-phospho-D-ribosyl)imidazole-4-carboxylate: step 1/2. This is Phosphoribosylaminoimidazole-succinocarboxamide synthase from Shewanella sp. (strain MR-4).